Reading from the N-terminus, the 358-residue chain is Mitogen-activated protein kinase 1 (358 aa).

Alanine 2 is subject to N-acetylalanine. One can recognise a Protein kinase domain in the interval tyrosine 23–leucine 311. Serine 27 is modified (phosphoserine; by SGK1). Residues isoleucine 29 to valine 37 and lysine 52 each bind ATP. Aspartate 147 (proton acceptor) is an active-site residue. Threonine 183 carries the post-translational modification Phosphothreonine; by MAP2K1 and MAP2K2. Residues threonine 183 to tyrosine 185 carry the TXY motif. At tyrosine 185 the chain carries Phosphotyrosine; by MAP2K1 and MAP2K2. At threonine 188 the chain carries Phosphothreonine; by autocatalysis. A phosphoserine mark is found at serine 244, serine 246, and serine 282.

It belongs to the protein kinase superfamily. CMGC Ser/Thr protein kinase family. MAP kinase subfamily. Binds both upstream activators and downstream substrates in multimolecular complexes. This interaction inhibits its tyrosine-kinase activity. Interacts with ADAM15, ARHGEF2, ARRB2, DAPK1 (via death domain), HSF4, IER3, IPO7, NISCH, SGK1, and isoform 1 of NEK2. Interacts (via phosphorylated form) with TPR (via C-terminal region and phosphorylated form); the interaction requires dimerization of MAPK1/ERK2 and increases following EGF stimulation. Interacts with MAP2K1. Interacts with DUSP6. Interacts (phosphorylated form) with CAV2 ('Tyr-19'-phosphorylated form); the interaction, promoted by insulin, leads to nuclear location and MAPK1 activation. Interacts with DCC. Interacts with MORG1. Interacts with PEA15. Interacts with MKNK2. MKNK2 isoform 1 binding prevents from dephosphorylation and inactivation. The phosphorylated form interacts with PML. Interacts with STYX. Interacts with CDK2AP2. Interacts with CAVIN4. Interacts with DUSP7; the interaction enhances DUSP7 phosphatase activity. Interacts with GIT1; this interaction is necessary for MAPK1 localization to focal adhesions. Interacts with ZNF263. Interacts with phosphoglycerate kinase PGK1; the interaction is direct, occurs under hypoxic conditions, and promotes interaction between PGK1 and PIN1. It depends on Mg(2+) as a cofactor. Post-translationally, dually phosphorylated on Thr-183 and Tyr-185, which activates the enzyme. Ligand-activated ALK induces tyrosine phosphorylation. Dephosphorylated by PTPRJ at Tyr-185. Phosphorylated upon FLT3 and KIT signaling. Dephosphorylated by DUSP1 and DUSP2 at Thr-183 and Tyr-185. ISGylated. In terms of processing, ubiquitinated by TRIM15 via 'Lys-63'-linked ubiquitination; leading to activation. Deubiquitinated by CYLD. As to expression, widely expressed.

The protein localises to the cytoplasm. Its subcellular location is the cytoskeleton. The protein resides in the spindle. It is found in the nucleus. It localises to the microtubule organizing center. The protein localises to the centrosome. Its subcellular location is the membrane. The protein resides in the caveola. It is found in the cell junction. It localises to the focal adhesion. It catalyses the reaction L-seryl-[protein] + ATP = O-phospho-L-seryl-[protein] + ADP + H(+). It carries out the reaction L-threonyl-[protein] + ATP = O-phospho-L-threonyl-[protein] + ADP + H(+). Phosphorylated by MAP2K1/MEK1 and MAP2K2/MEK2 on Thr-183 and Tyr-185 in response to external stimuli like insulin or NGF. Both phosphorylations are required for activity. This phosphorylation causes dramatic conformational changes, which enable full activation and interaction of MAPK1/ERK2 with its substrates. Phosphorylation on Ser-27 by SGK1 results in its activation by enhancing its interaction with MAP2K1/MEK1 and MAP2K2/MEK2. Dephosphorylated and inactivated by DUSP1, DUSP3, DUSP6 and DUSP9. Inactivated by pyrimidylpyrrole inhibitors. Serine/threonine kinase which acts as an essential component of the MAP kinase signal transduction pathway. MAPK1/ERK2 and MAPK3/ERK1 are the 2 MAPKs which play an important role in the MAPK/ERK cascade. They participate also in a signaling cascade initiated by activated KIT and KITLG/SCF. Depending on the cellular context, the MAPK/ERK cascade mediates diverse biological functions such as cell growth, adhesion, survival and differentiation through the regulation of transcription, translation, cytoskeletal rearrangements. The MAPK/ERK cascade also plays a role in initiation and regulation of meiosis, mitosis, and postmitotic functions in differentiated cells by phosphorylating a number of transcription factors. About 160 substrates have already been discovered for ERKs. Many of these substrates are localized in the nucleus, and seem to participate in the regulation of transcription upon stimulation. However, other substrates are found in the cytosol as well as in other cellular organelles, and those are responsible for processes such as translation, mitosis and apoptosis. Moreover, the MAPK/ERK cascade is also involved in the regulation of the endosomal dynamics, including lysosome processing and endosome cycling through the perinuclear recycling compartment (PNRC); as well as in the fragmentation of the Golgi apparatus during mitosis. The substrates include transcription factors (such as ATF2, BCL6, ELK1, ERF, FOS, HSF4 or SPZ1), cytoskeletal elements (such as CANX, CTTN, GJA1, MAP2, MAPT, PXN, SORBS3 or STMN1), regulators of apoptosis (such as BAD, BTG2, CASP9, DAPK1, IER3, MCL1 or PPARG), regulators of translation (such as EIF4EBP1 and FXR1) and a variety of other signaling-related molecules (like ARHGEF2, DCC, FRS2 or GRB10). Protein kinases (such as RAF1, RPS6KA1/RSK1, RPS6KA3/RSK2, RPS6KA2/RSK3, RPS6KA6/RSK4, SYK, MKNK1/MNK1, MKNK2/MNK2, RPS6KA5/MSK1, RPS6KA4/MSK2, MAPKAPK3 or MAPKAPK5) and phosphatases (such as DUSP1, DUSP4, DUSP6 or DUSP16) are other substrates which enable the propagation the MAPK/ERK signal to additional cytosolic and nuclear targets, thereby extending the specificity of the cascade. Mediates phosphorylation of TPR in response to EGF stimulation. May play a role in the spindle assembly checkpoint. Phosphorylates PML and promotes its interaction with PIN1, leading to PML degradation. Phosphorylates CDK2AP2. Phosphorylates phosphoglycerate kinase PGK1 under hypoxic conditions to promote its targeting to the mitochondrion and suppress the formation of acetyl-coenzyme A from pyruvate. Functionally, acts as a transcriptional repressor. Binds to a [GC]AAA[GC] consensus sequence. Repress the expression of interferon gamma-induced genes. Seems to bind to the promoter of CCL5, DMP1, IFIH1, IFITM1, IRF7, IRF9, LAMP3, OAS1, OAS2, OAS3 and STAT1. Transcriptional activity is independent of kinase activity. The polypeptide is Mitogen-activated protein kinase 1 (Mus musculus (Mouse)).